The following is a 557-amino-acid chain: Copine-7 (557 aa).

2 consecutive C2 domains span residues 1–128 (MSGD…TRPL) and 135–263 (NAGK…AQWD). The Ca(2+) site is built by aspartate 168, aspartate 174, aspartate 230, aspartate 232, and aspartate 238. The region spanning 306-505 (HCTVAIDFTA…PALRDIVQFV (200 aa)) is the VWFA domain.

Belongs to the copine family. It depends on Ca(2+) as a cofactor.

Its subcellular location is the cytoplasm. The protein resides in the nucleus. It localises to the cell membrane. In terms of biological role, calcium-dependent phospholipid-binding protein that may play a role in calcium-mediated intracellular processes. In Mus musculus (Mouse), this protein is Copine-7.